Consider the following 561-residue polypeptide: MQIRVPQRNRGRTFPHRSSHRRTPIHILEFLAAQPLLTLALILAVGLLIGKIRFFGISLGAAAVLFVALALSTVDPALQLPPLVYQLGLAMFVYAIGLSAGSEFFAEFRHRGWKLTLFMIGLLMLMMAVAYGIIKLFGLDEIIGAGMFAGALSSTPGMAAMVEMLEGIDDSVASEPVVGYSLAYPGAVIGSILVAAIGAKLMKVNHAADAAEEGLVSDPLEWTGVRIGPGINGTIAQLPTLAGEEIIATRVVHSKTFHSLAAPNDRLHEGMVLVIHGTPDALERAIAKVGKQQDVPIEDTDLVYSRFTVSSKAVVGRKISDLDTVRSGFIISRLRRGDADVVPEPDDVLHYSDRVRVIAPANRMSEVRRFLGDSERSLADVDLMPFAFGLVIGLAIGVIPIPLPGGNTLSLGFGGGPIVAGLILGALNRTGPIHWQMPYHASRTISTFGLAIFLAGVGTSAGVGFRQALTDPASLTVIAGGFIVTISSALVCALVCMPLFKLKWDEAMGVAAGCTTNPAIISYLNGQTGTELATRGYATVYPTAMIGKIIASQMLLLALIA.

Helical transmembrane passes span isoleucine 27–isoleucine 49, phenylalanine 54–leucine 71, leucine 83–phenylalanine 105, leucine 115–phenylalanine 137, isoleucine 142–valine 162, and valine 177–alanine 199. One can recognise an RCK C-terminal domain in the interval glutamine 292–aspartate 373. The next 4 helical transmembrane spans lie at leucine 383–glycine 405, leucine 409–asparagine 428, alanine 441–valine 463, and isoleucine 478–phenylalanine 500.

The protein belongs to the AAE transporter (TC 2.A.81) family.

It is found in the cell membrane. This is an uncharacterized protein from Corynebacterium diphtheriae (strain ATCC 700971 / NCTC 13129 / Biotype gravis).